The sequence spans 308 residues: MAIELPVGKKVTVTVPASSANLGPGFDTLGLALSLYDTVEVEVTDHGLEVEVFGEGQGELPLDGSHLVVKAIRAGLKAADVQVPGLRVVCHNNIPQSRGLGSSAAAAVAGVAAANGLAGFPLDDARVVQLSSAFEGHPDNAAASVLGNAVVSWTEIPVDGRTEPQFKAVTINVDSRIKATALVPDFHASTEAVRRVLPSDVTHLDARFNVSRCAVMTVALQHHPELLWEGTRDRLHQPYRADVLPVTAEWVNRLRNRGYAAYLSGAGPTIMVLHTEPVDEAVLNDAREAGLRVLSLDVADAVSVKVDA.

ATP is bound at residue 95-105 (PQSRGLGSSAA).

The protein belongs to the GHMP kinase family. Homoserine kinase subfamily.

The protein resides in the cytoplasm. It carries out the reaction L-homoserine + ATP = O-phospho-L-homoserine + ADP + H(+). Its pathway is amino-acid biosynthesis; L-threonine biosynthesis; L-threonine from L-aspartate: step 4/5. Catalyzes the ATP-dependent phosphorylation of L-homoserine to L-homoserine phosphate. This is Homoserine kinase from Corynebacterium diphtheriae (strain ATCC 700971 / NCTC 13129 / Biotype gravis).